The primary structure comprises 170 residues: Peptide deformylase (170 aa).

2 residues coordinate Fe cation: C88 and H130. Residue E131 is part of the active site. H134 provides a ligand contact to Fe cation.

It belongs to the polypeptide deformylase family. The cofactor is Fe(2+).

It carries out the reaction N-terminal N-formyl-L-methionyl-[peptide] + H2O = N-terminal L-methionyl-[peptide] + formate. Removes the formyl group from the N-terminal Met of newly synthesized proteins. Requires at least a dipeptide for an efficient rate of reaction. N-terminal L-methionine is a prerequisite for activity but the enzyme has broad specificity at other positions. This Acetivibrio thermocellus (strain ATCC 27405 / DSM 1237 / JCM 9322 / NBRC 103400 / NCIMB 10682 / NRRL B-4536 / VPI 7372) (Clostridium thermocellum) protein is Peptide deformylase.